Reading from the N-terminus, the 359-residue chain is 3-dehydroquinate synthase (359 aa).

NAD(+) is bound by residues 106-110, 130-131, K143, and K152; these read GVVGD and TS. Zn(2+)-binding residues include E185, H246, and H262.

The protein belongs to the sugar phosphate cyclases superfamily. Dehydroquinate synthase family. NAD(+) serves as cofactor. The cofactor is Co(2+). Zn(2+) is required as a cofactor.

It localises to the cytoplasm. The catalysed reaction is 7-phospho-2-dehydro-3-deoxy-D-arabino-heptonate = 3-dehydroquinate + phosphate. The protein operates within metabolic intermediate biosynthesis; chorismate biosynthesis; chorismate from D-erythrose 4-phosphate and phosphoenolpyruvate: step 2/7. In terms of biological role, catalyzes the conversion of 3-deoxy-D-arabino-heptulosonate 7-phosphate (DAHP) to dehydroquinate (DHQ). The chain is 3-dehydroquinate synthase from Lactiplantibacillus plantarum (strain ATCC BAA-793 / NCIMB 8826 / WCFS1) (Lactobacillus plantarum).